The following is a 143-amino-acid chain: Transcriptional regulator MraZ (143 aa).

2 consecutive SpoVT-AbrB domains span residues 5 to 47 (TFTP…PREE) and 76 to 119 (ADEQ…DAQA).

It belongs to the MraZ family. As to quaternary structure, forms oligomers.

The protein resides in the cytoplasm. It is found in the nucleoid. The polypeptide is Transcriptional regulator MraZ (Corynebacterium urealyticum (strain ATCC 43042 / DSM 7109)).